Consider the following 326-residue polypeptide: Ras association domain-containing protein 2 (326 aa).

Positions 176-264 constitute a Ras-associating domain; it reads YNHKTSVFTP…SKVFLMEKDQ (89 aa). Positions 272 to 319 constitute an SARAH domain; it reads VAQYIKFEMPVLKSFIQKLQEEEDREVEKLMRKYTVLRLMIRQRLEEI.

In terms of assembly, interacts directly with activated KRAS in a GTP-dependent manner. Interacts (via SARAH domain) with STK3/MST2 and STK4/MST1. Post-translationally, phosphorylated by STK3/MST2 and STK4/MST1.

It is found in the nucleus. The protein resides in the cytoplasm. It localises to the chromosome. Its subcellular location is the centromere. The protein localises to the kinetochore. In terms of biological role, potential tumor suppressor. Acts as a KRAS-specific effector protein. May promote apoptosis and cell cycle arrest. Stabilizes STK3/MST2 by protecting it from proteasomal degradation. This Mus musculus (Mouse) protein is Ras association domain-containing protein 2 (Rassf2).